We begin with the raw amino-acid sequence, 202 residues long: Nitrophorin-3 (202 aa).

Positions 1-23 (MEPYSALLAVTILCLTSTMGVSG) are cleaved as a signal peptide. 2 disulfides stabilise this stretch: Cys25–Cys144 and Cys62–Cys193. His80 contacts heme.

This sequence belongs to the calycin superfamily. Nitrophorin family. As to quaternary structure, interacts weakly with host coagulation factor IX (F9) (inactive and activated) in the presence of Ca(2+). In terms of tissue distribution, salivary gland (at protein level).

It localises to the secreted. Its function is as follows. Heme-based protein that deliver nitric oxide gas (NO) to the victim while feeding, resulting in vasodilation and inhibition of platelet aggregation. Reversibly binds nitric oxide (NO). Also binds tightly to histamine, which is released by the host to induce wound healing. Exhibits weak anticoagulant activity. This chain is Nitrophorin-3, found in Rhodnius prolixus (Triatomid bug).